A 202-amino-acid polypeptide reads, in one-letter code: N-(5'-phosphoribosyl)anthranilate isomerase (202 aa).

This sequence belongs to the TrpF family.

It catalyses the reaction N-(5-phospho-beta-D-ribosyl)anthranilate = 1-(2-carboxyphenylamino)-1-deoxy-D-ribulose 5-phosphate. Its pathway is amino-acid biosynthesis; L-tryptophan biosynthesis; L-tryptophan from chorismate: step 3/5. The polypeptide is N-(5'-phosphoribosyl)anthranilate isomerase (Bacillus cereus (strain ATCC 14579 / DSM 31 / CCUG 7414 / JCM 2152 / NBRC 15305 / NCIMB 9373 / NCTC 2599 / NRRL B-3711)).